A 277-amino-acid chain; its full sequence is Large ribosomal subunit protein uL2 (277 aa).

The segment at 219–277 (RPQTRGSAMNPVDHPHGGGEGKKNSGRHPVTPWGKPTKGAKTRRKKASDKLIISRRKGK) is disordered. Residues 231–241 (DHPHGGGEGKK) are compositionally biased toward basic and acidic residues. Residues 256-277 (KGAKTRRKKASDKLIISRRKGK) show a composition bias toward basic residues.

The protein belongs to the universal ribosomal protein uL2 family. Part of the 50S ribosomal subunit. Forms a bridge to the 30S subunit in the 70S ribosome.

One of the primary rRNA binding proteins. Required for association of the 30S and 50S subunits to form the 70S ribosome, for tRNA binding and peptide bond formation. It has been suggested to have peptidyltransferase activity; this is somewhat controversial. Makes several contacts with the 16S rRNA in the 70S ribosome. The polypeptide is Large ribosomal subunit protein uL2 (Campylobacter curvus (strain 525.92)).